The following is a 201-amino-acid chain: uncharacterized protein (201 aa).

Positions 64-78 (DNEIKEEEESEEEEK) are enriched in acidic residues. Disordered stretches follow at residues 64-114 (DNEI…FKNA) and 182-201 (ILPGGCTGNTETVDQGLSKQ). Basic residues predominate over residues 96–106 (RNKHGRNRNPR). Positions 189-201 (GNTETVDQGLSKQ) are enriched in polar residues.

This is an uncharacterized protein from Ostreid herpesvirus 1 (isolate France) (OsHV-1).